Consider the following 147-residue polypeptide: Deoxyuridine 5'-triphosphate nucleotidohydrolase (147 aa).

DUMP-binding residues include serine 69, glycine 82, aspartate 85, tyrosine 88, lysine 93, arginine 137, phenylalanine 142, and glycine 143.

This sequence belongs to the dUTPase family. As to quaternary structure, homotrimer. It depends on Mg(2+) as a cofactor.

It carries out the reaction dUTP + H2O = dUMP + diphosphate + H(+). The protein operates within pyrimidine metabolism; dUMP biosynthesis; dUMP from dCTP (dUTP route): step 2/2. Its function is as follows. Involved in nucleotide metabolism via production of dUMP, the immediate precursor of thymidine nucleotides, and decreases the intracellular concentration of dUTP so that uracil cannot be incorporated into DNA. Shows a significant activity against dITP, another potentially mutagenic nucleotide. This Saccharomyces cerevisiae (strain ATCC 204508 / S288c) (Baker's yeast) protein is Deoxyuridine 5'-triphosphate nucleotidohydrolase.